A 1216-amino-acid chain; its full sequence is Histone-lysine N-methyltransferase SETDB1-B (1216 aa).

The stretch at 38-61 forms a coiled coil; it reads KADLEQLQEWVEQREKEVADIDAL. 2 Tudor domains span residues 266–329 and 356–412; these read RLFV…LKKT and LLKP…NLKM. The disordered stretch occupies residues 417–513; sequence SQEKKMAGQQ…QGMPSDLQPK (97 aa). Positions 467–478 are enriched in pro residues; sequence PVAPQPAGPPQP. The segment covering 482-498 has biased composition (polar residues); that stretch reads ESPSFKSQMAKKSTGQL. An MBD domain is found at 595 to 666; sequence HRGRNPLLTP…EMFCLDPYVL (72 aa). One can recognise a Pre-SET domain in the interval 728-801; the sequence is VGCDCTDGCR…MCTNRLVQHG (74 aa). Zn(2+)-binding residues include Cys730, Cys732, Cys736, Cys742, Cys744, Cys782, Cys786, Cys788, and Cys793. In terms of domain architecture, SET spans 804–1179; the sequence is VRLQLFKTQN…AGTELTWDYN (376 aa). S-adenosyl-L-methionine contacts are provided by residues 814-816, Asp852, and Tyr854; that span reads KGW. 3 disordered regions span residues 892–944, 961–1057, and 1081–1108; these read LPAS…DTFV, RRQA…KTQA, and KSGG…NGPK. Residues 918 to 940 are compositionally biased toward acidic residues; it reads DSSEESDDEKDDDSNEDDSDSSD. Basic and acidic residues-rich tracts occupy residues 966–976 and 983–997; these read GLKEESQDSKD and GEDR…ETGK. Residues 1003 to 1016 are compositionally biased toward polar residues; the sequence is WLTNQSSTSANQSV. 2 stretches are compositionally biased toward basic and acidic residues: residues 1020-1029 and 1046-1055; these read GGIKTEKKDV and DDNKEREKKT. Residues 1082–1105 are compositionally biased toward gly residues; it reads SGGGGAGGGGSGPSHGHGGGGGDN. S-adenosyl-L-methionine is bound by residues Arg1133 and 1136–1137; that span reads NH. Zn(2+) is bound by residues Cys1139, Cys1192, Cys1194, and Cys1199. In terms of domain architecture, Post-SET spans 1188-1204; it reads KELLCCCGSTECRGRLL.

This sequence belongs to the class V-like SAM-binding methyltransferase superfamily. Histone-lysine methyltransferase family. Suvar3-9 subfamily.

It localises to the nucleus. Its subcellular location is the chromosome. The catalysed reaction is L-lysyl(4)-[histone H3] + 3 S-adenosyl-L-methionine = N(6),N(6),N(6)-trimethyl-L-lysyl(4)-[histone H3] + 3 S-adenosyl-L-homocysteine + 3 H(+). In terms of biological role, histone methyltransferase that specifically trimethylates 'Lys-9' of histone H3. H3 'Lys-9' trimethylation represents a specific tag for epigenetic transcriptional repression by recruiting HP1 (CBX1, CBX3 and/or CBX5) proteins to methylated histones. Mainly functions in euchromatin regions, thereby playing a central role in the silencing of euchromatic genes. H3 'Lys-9' trimethylation is coordinated with DNA methylation. Plays a role in promoter hypermethylation and transcriptional silencing of tumor suppressor genes (TSGs) or other tumor-related genes. Also required to maintain a transcriptionally repressive state of genes in undifferentiated embryonic stem cells (ESCs). Associates at promoter regions of tumor suppressor genes (TSGs) leading to their gene silencing. In Danio rerio (Zebrafish), this protein is Histone-lysine N-methyltransferase SETDB1-B (setdb1b).